The following is a 305-amino-acid chain: tRNA dimethylallyltransferase (305 aa).

8-15 is an ATP binding site; it reads GPTAVGKT. 10–15 is a substrate binding site; it reads TAVGKT. Residues 33–36 form an interaction with substrate tRNA region; that stretch reads DSRQ.

It belongs to the IPP transferase family. Monomer. Requires Mg(2+) as cofactor.

The catalysed reaction is adenosine(37) in tRNA + dimethylallyl diphosphate = N(6)-dimethylallyladenosine(37) in tRNA + diphosphate. In terms of biological role, catalyzes the transfer of a dimethylallyl group onto the adenine at position 37 in tRNAs that read codons beginning with uridine, leading to the formation of N6-(dimethylallyl)adenosine (i(6)A). The protein is tRNA dimethylallyltransferase of Thermotoga maritima (strain ATCC 43589 / DSM 3109 / JCM 10099 / NBRC 100826 / MSB8).